The primary structure comprises 501 residues: ATP synthase subunit alpha (501 aa).

169 to 176 (GDRQTGKT) contacts ATP.

The protein belongs to the ATPase alpha/beta chains family. F-type ATPases have 2 components, CF(1) - the catalytic core - and CF(0) - the membrane proton channel. CF(1) has five subunits: alpha(3), beta(3), gamma(1), delta(1), epsilon(1). CF(0) has three main subunits: a(1), b(2) and c(9-12). The alpha and beta chains form an alternating ring which encloses part of the gamma chain. CF(1) is attached to CF(0) by a central stalk formed by the gamma and epsilon chains, while a peripheral stalk is formed by the delta and b chains.

The protein resides in the cell membrane. It catalyses the reaction ATP + H2O + 4 H(+)(in) = ADP + phosphate + 5 H(+)(out). Its function is as follows. Produces ATP from ADP in the presence of a proton gradient across the membrane. The alpha chain is a regulatory subunit. This chain is ATP synthase subunit alpha, found in Streptococcus mutans serotype c (strain ATCC 700610 / UA159).